A 435-amino-acid polypeptide reads, in one-letter code: Trigger factor (435 aa).

The PPIase FKBP-type domain occupies 183–263 (GDFINVDVTI…VKTIWQGNMP (81 aa)).

This sequence belongs to the FKBP-type PPIase family. Tig subfamily.

It localises to the cytoplasm. The catalysed reaction is [protein]-peptidylproline (omega=180) = [protein]-peptidylproline (omega=0). Involved in protein export. Acts as a chaperone by maintaining the newly synthesized protein in an open conformation. Functions as a peptidyl-prolyl cis-trans isomerase. In Protochlamydia amoebophila (strain UWE25), this protein is Trigger factor.